The chain runs to 312 residues: Aspartate carbamoyltransferase catalytic subunit (312 aa).

2 residues coordinate carbamoyl phosphate: arginine 58 and threonine 59. Lysine 86 provides a ligand contact to L-aspartate. Arginine 108, histidine 136, and glutamine 139 together coordinate carbamoyl phosphate. Residues arginine 169 and arginine 223 each coordinate L-aspartate. Carbamoyl phosphate-binding residues include glycine 264 and proline 265.

Belongs to the aspartate/ornithine carbamoyltransferase superfamily. ATCase family. As to quaternary structure, heterododecamer (2C3:3R2) of six catalytic PyrB chains organized as two trimers (C3), and six regulatory PyrI chains organized as three dimers (R2).

The enzyme catalyses carbamoyl phosphate + L-aspartate = N-carbamoyl-L-aspartate + phosphate + H(+). It functions in the pathway pyrimidine metabolism; UMP biosynthesis via de novo pathway; (S)-dihydroorotate from bicarbonate: step 2/3. Its function is as follows. Catalyzes the condensation of carbamoyl phosphate and aspartate to form carbamoyl aspartate and inorganic phosphate, the committed step in the de novo pyrimidine nucleotide biosynthesis pathway. This is Aspartate carbamoyltransferase catalytic subunit from Heliobacterium modesticaldum (strain ATCC 51547 / Ice1).